The following is a 119-amino-acid chain: Beta-2-microglobulin (119 aa).

Residues 1–20 form the signal peptide; that stretch reads MGRFVAVALLVLLSLSGLET. An Ig-like C1-type domain is found at 25–114; the sequence is PKIQVYSRHP…VTFSTPKTVK (90 aa). Cysteine 45 and cysteine 100 are joined by a disulfide.

It belongs to the beta-2-microglobulin family. As to quaternary structure, heterodimer of an alpha chain and a beta chain. Beta-2-microglobulin is the beta-chain of major histocompatibility complex class I molecules.

Its subcellular location is the secreted. Its function is as follows. Component of the class I major histocompatibility complex (MHC). Involved in the presentation of peptide antigens to the immune system. This is Beta-2-microglobulin (B2M) from Callicebus personatus nigrifrons (Black-fronted titi).